The sequence spans 90 residues: Probable Fe(2+)-trafficking protein (90 aa).

Belongs to the Fe(2+)-trafficking protein family.

In terms of biological role, could be a mediator in iron transactions between iron acquisition and iron-requiring processes, such as synthesis and/or repair of Fe-S clusters in biosynthetic enzymes. The polypeptide is Probable Fe(2+)-trafficking protein (Halorhodospira halophila (strain DSM 244 / SL1) (Ectothiorhodospira halophila (strain DSM 244 / SL1))).